Here is a 210-residue protein sequence, read N- to C-terminus: Protein SgcE (210 aa).

Ser6 is a substrate binding site. A divalent metal cation-binding residues include His31, Asp33, and His64. Asp33 functions as the Proton acceptor in the catalytic mechanism. Substrate-binding positions include His64, 140–143 (DGQG), 169–171 (DGG), and 191–192 (GR). Asp169 provides a ligand contact to a divalent metal cation. Asp169 serves as the catalytic Proton donor.

This sequence belongs to the ribulose-phosphate 3-epimerase family. Co(2+) serves as cofactor. Requires Fe(2+) as cofactor. Mn(2+) is required as a cofactor. The cofactor is Zn(2+).

It functions in the pathway carbohydrate degradation. Functionally, probable pentose-5-phosphate 3-epimerase. The sequence is that of Protein SgcE (sgcE) from Escherichia coli (strain K12).